An 818-amino-acid chain; its full sequence is Glycogen phosphorylase (818 aa).

K667 carries the post-translational modification N6-(pyridoxal phosphate)lysine.

This sequence belongs to the glycogen phosphorylase family. Requires pyridoxal 5'-phosphate as cofactor.

It carries out the reaction [(1-&gt;4)-alpha-D-glucosyl](n) + phosphate = [(1-&gt;4)-alpha-D-glucosyl](n-1) + alpha-D-glucose 1-phosphate. In terms of biological role, phosphorylase is an important allosteric enzyme in carbohydrate metabolism. Enzymes from different sources differ in their regulatory mechanisms and in their natural substrates. However, all known phosphorylases share catalytic and structural properties. This chain is Glycogen phosphorylase (glgP), found in Pasteurella multocida (strain Pm70).